Consider the following 354-residue polypeptide: N-acylethanolamine-hydrolyzing acid amidase (354 aa).

Positions 1-22 (MRSPGIVLLLLLLLLLPPGAAP) are cleaved as a signal peptide. N-linked (GlcNAc...) asparagine glycosylation is found at N35 and N104. C123 functions as the Nucleophile in the catalytic mechanism. 3 N-linked (GlcNAc...) asparagine glycosylation sites follow: N306, N312, and N352.

It belongs to the acid ceramidase family. In terms of assembly, heterodimer of an alpha and a beta subunit, produced by autocatalytic cleavage. Post-translationally, N-glycosylated. Tunicamycin treatment causes a reduction in specific activity against N-palmitoylethanolamine. Autoproteolytic cleavage at pH 4.5 gives rise to the alpha and beta subunit. Cleavage gives rise to a conformation change that activates the enzyme. The same catalytic Cys residue mediates the autoproteolytic cleavage and subsequent hydrolysis of lipid substrates.

The protein localises to the lysosome. Its subcellular location is the membrane. The catalysed reaction is N-hexadecanoylethanolamine + H2O = ethanolamine + hexadecanoate. The enzyme catalyses an N-(long-chain fatty acyl)ethanolamine + H2O = a long-chain fatty acid + ethanolamine. It carries out the reaction N-dodecanoylethanolamine + H2O = dodecanoate + ethanolamine. It catalyses the reaction N-tetradecanoylethanolamine + H2O = tetradecanoate + ethanolamine. The catalysed reaction is an N-acylsphing-4-enine + H2O = sphing-4-enine + a fatty acid. The enzyme catalyses N-hexadecanoylsphing-4-enine + H2O = sphing-4-enine + hexadecanoate. It carries out the reaction N-dodecanoylsphing-4-enine + H2O = dodecanoate + sphing-4-enine. It functions in the pathway lipid metabolism; fatty acid metabolism. Functionally, degrades bioactive fatty acid amides to their corresponding acids, with the following preference: N-palmitoylethanolamine &gt; N-myristoylethanolamine &gt; N-stearoylethanolamine &gt; N-oleoylethanolamine &gt; N-linoleoylethanolamine &gt; N-arachidonoylethanolamine. This chain is N-acylethanolamine-hydrolyzing acid amidase, found in Cavia porcellus (Guinea pig).